We begin with the raw amino-acid sequence, 81 residues long: UPF0729 protein C18orf32 homolog (81 aa).

Residues 45–58 (AASDQKVSEKSNGT) show a composition bias toward polar residues. The interval 45 to 81 (AASDQKVSEKSNGTCKPESNGEATANGSTIAADKKTD) is disordered.

It belongs to the UPF0729 family.

The protein is UPF0729 protein C18orf32 homolog of Anoplopoma fimbria (Sablefish).